Consider the following 627-residue polypeptide: MACPF domain-containing protein At1g14780 (627 aa).

One can recognise an MACPF domain in the interval 1 to 339 (MSRDGGDVIE…PPLMDLQYFL (339 aa)).

It belongs to the complement C6/C7/C8/C9 (TC 1.C.39) family.

In terms of biological role, negatively controls the salicylic acid (SA)-mediated pathway of programmed cell death in plant immunity. In Arabidopsis thaliana (Mouse-ear cress), this protein is MACPF domain-containing protein At1g14780.